The sequence spans 160 residues: MYSAKNRFVQAVQRLQDFKNMYDYDARLATFADWPFTENCKCTPESMAKAGFVHCPTENEPDVACCFFCLKELEGWEPDDDPWTEHSKRSANCGFLSLTKCVNDLTMEGFLRLEGDRIKSFYRKFSTVVLQYVEEEMTAATKRLLEYFSNQHHCSIDLDH.

One copy of the BIR repeat lies at 27 to 97 (RLATFADWPF…KRSANCGFLS (71 aa)). Position 43 is a phosphothreonine; by CDK1 (T43). Positions 66, 69, 86, and 93 each coordinate Zn(2+).

Belongs to the IAP family. In terms of assembly, component of the CPC at least composed of survivin/birc5, incenp, cdca8/borealin and/or cdca9/dasra-A, and aurkb/aurora-B. Interacts directly with incenp (via N-terminus), and may weakly interact with aurkb (via N-terminus) to stabilize the complex. Interacts with GTP-bound ran in both the S and M phases of the cell cycle. Also found in a complex with ubiquitin-mediated signaling proteins including at least usp9x/xFAM, nploc4/npl4 and ufd1. Post-translationally, ubiquitination is required for centrosome-targeting.

The protein localises to the cytoplasm. The protein resides in the nucleus. Its subcellular location is the chromosome. It is found in the centromere. It localises to the cytoskeleton. The protein localises to the spindle. In terms of biological role, component of the chromosomal passenger complex (CPC), a complex that acts as a key regulator of mitosis. The CPC complex has essential functions at the centromere in ensuring correct chromosome alignment and segregation and is required for chromatin-induced microtubule stabilization and spindle assembly. Stimulates the mitotic kinase activity of aurkb/aurora-B in the CPC. Does not appear to exhibit anti-apoptotic activity. The chain is Baculoviral IAP repeat-containing protein 5.1-A (birc5.1-a) from Xenopus laevis (African clawed frog).